A 434-amino-acid chain; its full sequence is UDP-N-acetylmuramate--L-alanine ligase (434 aa).

G110–S116 lines the ATP pocket.

The protein belongs to the MurCDEF family.

The protein resides in the cytoplasm. The enzyme catalyses UDP-N-acetyl-alpha-D-muramate + L-alanine + ATP = UDP-N-acetyl-alpha-D-muramoyl-L-alanine + ADP + phosphate + H(+). The protein operates within cell wall biogenesis; peptidoglycan biosynthesis. Cell wall formation. The sequence is that of UDP-N-acetylmuramate--L-alanine ligase from Limosilactobacillus reuteri (strain DSM 20016) (Lactobacillus reuteri).